The chain runs to 237 residues: Protein XpsM (237 aa).

The disordered stretch occupies residues 1 to 21 (MPAATWTASPSPPNWPVPMPR). The span at 10–21 (PSPPNWPVPMPR) shows a compositional bias: pro residues.

This is Protein XpsM (xpsM) from Xanthomonas campestris pv. campestris (strain ATCC 33913 / DSM 3586 / NCPPB 528 / LMG 568 / P 25).